The sequence spans 63 residues: Large ribosomal subunit protein bL28 (63 aa).

This sequence belongs to the bacterial ribosomal protein bL28 family.

This chain is Large ribosomal subunit protein bL28, found in Coprothermobacter proteolyticus (strain ATCC 35245 / DSM 5265 / OCM 4 / BT).